The sequence spans 166 residues: Large ribosomal subunit protein uL10 (166 aa).

It belongs to the universal ribosomal protein uL10 family. In terms of assembly, part of the ribosomal stalk of the 50S ribosomal subunit. The N-terminus interacts with L11 and the large rRNA to form the base of the stalk. The C-terminus forms an elongated spine to which L12 dimers bind in a sequential fashion forming a multimeric L10(L12)X complex.

Functionally, forms part of the ribosomal stalk, playing a central role in the interaction of the ribosome with GTP-bound translation factors. This is Large ribosomal subunit protein uL10 from Pelagibacter ubique (strain HTCC1062).